The sequence spans 463 residues: ATP-dependent protease ATPase subunit HslU (463 aa).

Residues valine 19, 61–66, aspartate 277, glutamate 341, and arginine 413 contribute to the ATP site; that span reads GVGKTE.

This sequence belongs to the ClpX chaperone family. HslU subfamily. In terms of assembly, a double ring-shaped homohexamer of HslV is capped on each side by a ring-shaped HslU homohexamer. The assembly of the HslU/HslV complex is dependent on binding of ATP.

Its subcellular location is the cytoplasm. In terms of biological role, ATPase subunit of a proteasome-like degradation complex; this subunit has chaperone activity. The binding of ATP and its subsequent hydrolysis by HslU are essential for unfolding of protein substrates subsequently hydrolyzed by HslV. HslU recognizes the N-terminal part of its protein substrates and unfolds these before they are guided to HslV for hydrolysis. The polypeptide is ATP-dependent protease ATPase subunit HslU (Shouchella clausii (strain KSM-K16) (Alkalihalobacillus clausii)).